Consider the following 343-residue polypeptide: Small ribosomal subunit biogenesis GTPase RsgA (343 aa).

The region spanning 116–275 (RGQLKPVAAN…LIDSPGIREF (160 aa)) is the CP-type G domain. GTP-binding positions include 163 to 166 (NKAD) and 217 to 225 (GQSGVGKSS). Zn(2+)-binding residues include Cys299, Cys304, His306, and Cys312.

This sequence belongs to the TRAFAC class YlqF/YawG GTPase family. RsgA subfamily. Monomer. Associates with 30S ribosomal subunit, binds 16S rRNA. The cofactor is Zn(2+).

Its subcellular location is the cytoplasm. Functionally, one of several proteins that assist in the late maturation steps of the functional core of the 30S ribosomal subunit. Helps release RbfA from mature subunits. May play a role in the assembly of ribosomal proteins into the subunit. Circularly permuted GTPase that catalyzes slow GTP hydrolysis, GTPase activity is stimulated by the 30S ribosomal subunit. The protein is Small ribosomal subunit biogenesis GTPase RsgA of Pseudomonas savastanoi pv. phaseolicola (strain 1448A / Race 6) (Pseudomonas syringae pv. phaseolicola (strain 1448A / Race 6)).